A 243-amino-acid chain; its full sequence is Triosephosphate isomerase (243 aa).

9–11 (NWK) is a substrate binding site. The active-site Electrophile is histidine 98. Residue glutamate 167 is the Proton acceptor of the active site. Substrate contacts are provided by residues glycine 173, serine 205, and 226 to 227 (GG).

Belongs to the triosephosphate isomerase family. As to quaternary structure, homodimer.

The protein resides in the cytoplasm. It carries out the reaction D-glyceraldehyde 3-phosphate = dihydroxyacetone phosphate. The protein operates within carbohydrate biosynthesis; gluconeogenesis. Its pathway is carbohydrate degradation; glycolysis; D-glyceraldehyde 3-phosphate from glycerone phosphate: step 1/1. Functionally, involved in the gluconeogenesis. Catalyzes stereospecifically the conversion of dihydroxyacetone phosphate (DHAP) to D-glyceraldehyde-3-phosphate (G3P). This is Triosephosphate isomerase from Mesomycoplasma hyorhinis (Mycoplasma hyorhinis).